The primary structure comprises 140 residues: Nucleoside diphosphate kinase (140 aa).

Residues Lys9, Phe57, Arg85, Thr91, Arg102, and Asn112 each coordinate ATP. The Pros-phosphohistidine intermediate role is filled by His115.

This sequence belongs to the NDK family. In terms of assembly, homotetramer. Mg(2+) is required as a cofactor.

It is found in the cytoplasm. It carries out the reaction a 2'-deoxyribonucleoside 5'-diphosphate + ATP = a 2'-deoxyribonucleoside 5'-triphosphate + ADP. The enzyme catalyses a ribonucleoside 5'-diphosphate + ATP = a ribonucleoside 5'-triphosphate + ADP. Major role in the synthesis of nucleoside triphosphates other than ATP. The ATP gamma phosphate is transferred to the NDP beta phosphate via a ping-pong mechanism, using a phosphorylated active-site intermediate. The polypeptide is Nucleoside diphosphate kinase (Chlorobium chlorochromatii (strain CaD3)).